The following is a 565-amino-acid chain: uncharacterized protein (565 aa).

Residues 1 to 21 form the signal peptide; the sequence is MKIPSQQVLLALPLLASPAQS. 2 N-linked (GlcNAc...) asparagine glycosylation sites follow: N46 and N88. The FAD-binding PCMH-type domain maps to 118–302; that stretch reads QGIVPYYSVS…TSVTYKTHPK (185 aa). H155 bears the Pros-8alpha-FAD histidine mark. N191, N314, N364, N371, and N484 each carry an N-linked (GlcNAc...) asparagine glycan.

The protein belongs to the oxygen-dependent FAD-linked oxidoreductase family. Requires FAD as cofactor.

It is found in the secreted. This is an uncharacterized protein from Arthroderma benhamiae (strain ATCC MYA-4681 / CBS 112371) (Trichophyton mentagrophytes).